A 350-amino-acid chain; its full sequence is Dauer larva development regulatory growth factor daf-7 (350 aa).

Residues 1 to 21 (MFMASSLPVFIFLLSLPHGLT) form the signal peptide. The propeptide occupies 22 to 234 (FNCTNSGVCI…TRPKGSRKRR (213 aa)). Residue asparagine 23 is glycosylated (N-linked (GlcNAc...) asparagine). Disulfide bonds link cysteine 241–cysteine 251, cysteine 250–cysteine 315, cysteine 278–cysteine 347, and cysteine 282–cysteine 349.

Belongs to the TGF-beta family. As to expression, expressed in the chemosensory neurons, including in the ASJ neurons in males. Expressed in the ASI neurons.

It is found in the secreted. Its function is as follows. Under harsh environmental conditions, larvae enter a developmentally arrested state known as dauer; TGF-beta-like daf-7 acts to inhibit dauer larva formation and promote growth. May be a ligand to cell surface receptor daf-4. May act as a negative regulator of dauer larva development by transducing chemosensory information from ASI neurons. Involved in sensitivity to CO2 levels. Involved in mate searching behavior of males, acting in concert with the neuropeptide pdf-1. In AWC neurons, acts to promote expression of srsx-3, a member of the GPCR family. The sequence is that of Dauer larva development regulatory growth factor daf-7 from Caenorhabditis elegans.